The chain runs to 934 residues: Coiled-coil domain-containing protein 39 (934 aa).

Coiled coils occupy residues 17-133, 164-512, 540-615, and 664-826; these read IPVA…DGLK, SQQD…HNDL, VDRS…SQIR, and VIKA…EQDI. The tract at residues 866–934 is disordered; that stretch reads LPTAKGPSSR…NIPKGKKLNK (69 aa). Residues 873–892 show a composition bias toward low complexity; that stretch reads SSRSSSQSSLSSIRSLEDSI. S887 and S895 each carry phosphoserine. Residues 912–925 show a composition bias toward low complexity; it reads RSDSSRSSSGSNSN.

This sequence belongs to the CCDC39 family.

Its subcellular location is the cytoplasm. It localises to the cytoskeleton. The protein localises to the cilium axoneme. Functionally, required for assembly of dynein regulatory complex (DRC) and inner dynein arm (IDA) complexes, which are responsible for ciliary beat regulation, thereby playing a central role in motility in cilia and flagella. Probably acts together with CCDC40 to form a molecular ruler that determines the 96 nanometer (nm) repeat length and arrangements of components in cilia and flagella. Not required for outer dynein arm complexes assembly. The polypeptide is Coiled-coil domain-containing protein 39 (Ccdc39) (Rattus norvegicus (Rat)).